The following is a 445-amino-acid chain: Exodeoxyribonuclease 7 large subunit (445 aa).

This sequence belongs to the XseA family. In terms of assembly, heterooligomer composed of large and small subunits.

The protein resides in the cytoplasm. It catalyses the reaction Exonucleolytic cleavage in either 5'- to 3'- or 3'- to 5'-direction to yield nucleoside 5'-phosphates.. Its function is as follows. Bidirectionally degrades single-stranded DNA into large acid-insoluble oligonucleotides, which are then degraded further into small acid-soluble oligonucleotides. The protein is Exodeoxyribonuclease 7 large subunit of Delftia acidovorans (strain DSM 14801 / SPH-1).